The chain runs to 308 residues: UDP-N-acetylenolpyruvoylglucosamine reductase (308 aa).

The FAD-binding PCMH-type domain maps to 32 to 196 (VGGPAARLYK…ISAKLQLSPG (165 aa)). Residue Arg-176 is part of the active site. The active-site Proton donor is the Ser-225. Glu-296 is an active-site residue.

Belongs to the MurB family. Requires FAD as cofactor.

Its subcellular location is the cytoplasm. The catalysed reaction is UDP-N-acetyl-alpha-D-muramate + NADP(+) = UDP-N-acetyl-3-O-(1-carboxyvinyl)-alpha-D-glucosamine + NADPH + H(+). Its pathway is cell wall biogenesis; peptidoglycan biosynthesis. Functionally, cell wall formation. This chain is UDP-N-acetylenolpyruvoylglucosamine reductase, found in Legionella pneumophila (strain Lens).